The primary structure comprises 326 residues: Peroxidase 6 (326 aa).

An N-terminal signal peptide occupies residues Met-1–Ala-20. The N-linked (GlcNAc...) asparagine glycan is linked to Asn-21. Intrachain disulfides connect Cys-31–Cys-112, Cys-64–Cys-69, Cys-118–Cys-318, and Cys-197–Cys-228. His-62 functions as the Proton acceptor in the catalytic mechanism. The Ca(2+) site is built by Asp-63, Val-66, Gly-68, Asp-70, and Ser-72. Asn-163 is a glycosylation site (N-linked (GlcNAc...) asparagine). His-190 is a binding site for heme b. Thr-191 is a binding site for Ca(2+). 2 N-linked (GlcNAc...) asparagine glycosylation sites follow: Asn-206 and Asn-230. Asp-242, Thr-245, and Asp-250 together coordinate Ca(2+). The N-linked (GlcNAc...) asparagine glycan is linked to Asn-274.

It belongs to the peroxidase family. Classical plant (class III) peroxidase subfamily. The cofactor is heme b. Requires Ca(2+) as cofactor.

Its subcellular location is the secreted. It catalyses the reaction 2 a phenolic donor + H2O2 = 2 a phenolic radical donor + 2 H2O. Functionally, removal of H(2)O(2), oxidation of toxic reductants, biosynthesis and degradation of lignin, suberization, auxin catabolism, response to environmental stresses such as wounding, pathogen attack and oxidative stress. These functions might be dependent on each isozyme/isoform in each plant tissue. The polypeptide is Peroxidase 6 (PER6) (Arabidopsis thaliana (Mouse-ear cress)).